The chain runs to 439 residues: Hemagglutinin-esterase (439 aa).

The signal sequence occupies residues 1–22 (MGCMCIAMAPRTLLLLIGCQLV). The segment at 12–132 (TLLLLIGCQL…DNKRWMGNKA (121 aa)) is esterase domain 1. Residues 23–407 (FGFNEPLNIV…PVCIYDPLPV (385 aa)) are Virion surface-facing. Serine 45 acts as the Nucleophile in catalysis. Cysteines 49 and 70 form a disulfide. Residues asparagine 94, asparagine 152, asparagine 196, asparagine 246, asparagine 309, and asparagine 316 are each glycosylated (N-linked (GlcNAc...) asparagine; by host). The cysteines at positions 118 and 167 are disulfide-linked. Positions 133–281 (RFYARVYEKM…GNYKAVSLEY (149 aa)) are receptor binding. Cystine bridges form between cysteine 202-cysteine 291 and cysteine 210-cysteine 264. The tract at residues 282–395 (LLSLPSKAIC…HCPTAANIGY (114 aa)) is esterase domain 2. Cysteines 322 and 327 form a disulfide. Asparagine 331 carries N-linked (GlcNAc...) asparagine; by host glycosylation. Catalysis depends on charge relay system residues aspartate 342 and histidine 345. N-linked (GlcNAc...) asparagine; by host glycosylation is found at asparagine 360 and asparagine 374. Residues cysteine 363 and cysteine 387 are joined by a disulfide bond. The helical transmembrane segment at 408–428 (ILLGVLLGIAVLIIVFLMFYF) threads the bilayer. Residues 429–439 (MTDSGVRLHEA) are Intravirion-facing.

Belongs to the influenza type C/coronaviruses hemagglutinin-esterase family. As to quaternary structure, homodimer; disulfide-linked. Forms a complex with the M protein in the pre-Golgi. Associates then with S-M complex to form a ternary complex S-M-HE. In terms of processing, N-glycosylated in the host RER.

It localises to the virion membrane. Its subcellular location is the host cell membrane. It carries out the reaction N-acetyl-9-O-acetylneuraminate + H2O = N-acetylneuraminate + acetate + H(+). The enzyme catalyses N-acetyl-4-O-acetylneuraminate + H2O = N-acetylneuraminate + acetate + H(+). Functionally, structural protein that makes short spikes at the surface of the virus. Contains receptor binding and receptor-destroying activities. Mediates de-O-acetylation of N-acetyl-4-O-acetylneuraminic acid, which is probably the receptor determinant recognized by the virus on the surface of erythrocytes and susceptible cells. This receptor-destroying activity is important for virus release as it probably helps preventing self-aggregation and ensures the efficient spread of the progeny virus from cell to cell. May serve as a secondary viral attachment protein for initiating infection, the spike protein being the major one. May become a target for both the humoral and the cellular branches of the immune system. The protein is Hemagglutinin-esterase of Murine coronavirus (strain S) (MHV-S).